The sequence spans 488 residues: Probable cytosol aminopeptidase (488 aa).

The Mn(2+) site is built by lysine 251 and aspartate 256. Lysine 263 is an active-site residue. Aspartate 274, aspartate 333, and glutamate 335 together coordinate Mn(2+). Arginine 337 is an active-site residue.

This sequence belongs to the peptidase M17 family. Mn(2+) is required as a cofactor.

It is found in the cytoplasm. It carries out the reaction Release of an N-terminal amino acid, Xaa-|-Yaa-, in which Xaa is preferably Leu, but may be other amino acids including Pro although not Arg or Lys, and Yaa may be Pro. Amino acid amides and methyl esters are also readily hydrolyzed, but rates on arylamides are exceedingly low.. The catalysed reaction is Release of an N-terminal amino acid, preferentially leucine, but not glutamic or aspartic acids.. In terms of biological role, presumably involved in the processing and regular turnover of intracellular proteins. Catalyzes the removal of unsubstituted N-terminal amino acids from various peptides. The chain is Probable cytosol aminopeptidase from Cenarchaeum symbiosum (strain A).